We begin with the raw amino-acid sequence, 198 residues long: Nucleoside triphosphate pyrophosphatase 1 (198 aa).

Catalysis depends on D75, which acts as the Proton acceptor.

It belongs to the Maf family. Requires a divalent metal cation as cofactor.

The protein resides in the cytoplasm. It catalyses the reaction a ribonucleoside 5'-triphosphate + H2O = a ribonucleoside 5'-phosphate + diphosphate + H(+). It carries out the reaction a 2'-deoxyribonucleoside 5'-triphosphate + H2O = a 2'-deoxyribonucleoside 5'-phosphate + diphosphate + H(+). In terms of biological role, nucleoside triphosphate pyrophosphatase. May have a dual role in cell division arrest and in preventing the incorporation of modified nucleotides into cellular nucleic acids. This chain is Nucleoside triphosphate pyrophosphatase 1, found in Jannaschia sp. (strain CCS1).